Reading from the N-terminus, the 430-residue chain is Elongation factor 1-alpha (430 aa).

Positions lysine 7 to valine 219 constitute a tr-type G domain. Residues glycine 16–serine 23 are G1. Residue glycine 16–serine 23 coordinates GTP. Serine 23 serves as a coordination point for Mg(2+). Residues glycine 70–aspartate 74 form a G2 region. Residues aspartate 91–glycine 94 form a G3 region. Residues aspartate 91 to histidine 95 and asparagine 146 to aspartate 149 each bind GTP. Positions asparagine 146–aspartate 149 are G4. Residues serine 183 to tryptophan 185 are G5.

Belongs to the TRAFAC class translation factor GTPase superfamily. Classic translation factor GTPase family. EF-Tu/EF-1A subfamily.

Its subcellular location is the cytoplasm. The catalysed reaction is GTP + H2O = GDP + phosphate + H(+). Functionally, GTP hydrolase that promotes the GTP-dependent binding of aminoacyl-tRNA to the A-site of ribosomes during protein biosynthesis. The chain is Elongation factor 1-alpha from Pyrococcus woesei.